The sequence spans 111 residues: Antirepressor protein CarS (111 aa).

As to quaternary structure, monomer. Interacts with CarA and CarH.

Its function is as follows. Involved in carotenoid biosynthesis. Antagonizes the transcriptional repressor proteins CarA and CarH by preventing their binding to DNA. Can also dissociate preformed CarA-DNA complexes. Does not bind DNA. The chain is Antirepressor protein CarS (carS) from Myxococcus xanthus.